We begin with the raw amino-acid sequence, 623 residues long: Transketolase (623 aa).

Position 1 is an N-acetylmethionine (Met-1). Residues Lys-6 and Lys-11 each carry the N6-acetyllysine modification. His-37 provides a ligand contact to substrate. The thiamine diphosphate site is built by Ser-40 and His-77. Phosphoserine is present on Ser-104. 123–125 (GSL) is a thiamine diphosphate binding site. N6-acetyllysine is present on Lys-144. Asp-155 lines the Mg(2+) pocket. Thiamine diphosphate-binding residues include Gly-156 and Asn-185. Residues Asn-185 and Leu-187 each coordinate Mg(2+). N6-acetyllysine occurs at positions 204, 232, and 241. Residues Lys-244 and His-258 each contribute to the thiamine diphosphate site. Position 258 (His-258) interacts with substrate. Residue Lys-260 is modified to N6-acetyllysine. Position 275 is a phosphotyrosine (Tyr-275). Phosphothreonine is present on Thr-287. At Ser-295 the chain carries Phosphoserine. Arg-318 and Ser-345 together coordinate substrate. Ser-345 bears the Phosphoserine mark. Lys-352 is covalently cross-linked (Glycyl lysine isopeptide (Lys-Gly) (interchain with G-Cter in SUMO2)). Glu-366 acts as the Proton donor in catalysis. Phe-392 lines the thiamine diphosphate pocket. His-416 and Asp-424 together coordinate substrate. Gln-428 contributes to the thiamine diphosphate binding site. Position 474 (Arg-474) interacts with substrate. Lys-538 and Lys-603 each carry N6-acetyllysine.

It belongs to the transketolase family. Homodimer. Mg(2+) is required as a cofactor. It depends on Ca(2+) as a cofactor. Requires Mn(2+) as cofactor. The cofactor is Co(2+). Thiamine diphosphate serves as cofactor.

The catalysed reaction is D-sedoheptulose 7-phosphate + D-glyceraldehyde 3-phosphate = aldehydo-D-ribose 5-phosphate + D-xylulose 5-phosphate. Functionally, catalyzes the transfer of a two-carbon ketol group from a ketose donor to an aldose acceptor, via a covalent intermediate with the cofactor thiamine pyrophosphate. The sequence is that of Transketolase (Tkt) from Mus musculus (Mouse).